The following is a 295-amino-acid chain: Small ribosomal subunit biogenesis GTPase RsgA (295 aa).

The 161-residue stretch at 68–228 (KNLLVKPHVA…VVDTPGFANL (161 aa)) folds into the CP-type G domain. GTP contacts are provided by residues 117 to 120 (NKMD) and 170 to 178 (GLSGVGKSS). Zn(2+)-binding residues include C250, C255, H257, and C263.

The protein belongs to the TRAFAC class YlqF/YawG GTPase family. RsgA subfamily. In terms of assembly, monomer. Associates with 30S ribosomal subunit, binds 16S rRNA. Zn(2+) serves as cofactor.

The protein localises to the cytoplasm. In terms of biological role, one of several proteins that assist in the late maturation steps of the functional core of the 30S ribosomal subunit. Helps release RbfA from mature subunits. May play a role in the assembly of ribosomal proteins into the subunit. Circularly permuted GTPase that catalyzes slow GTP hydrolysis, GTPase activity is stimulated by the 30S ribosomal subunit. This is Small ribosomal subunit biogenesis GTPase RsgA from Thermotoga neapolitana (strain ATCC 49049 / DSM 4359 / NBRC 107923 / NS-E).